A 199-amino-acid chain; its full sequence is Pyridoxal 5'-phosphate synthase subunit PdxT (199 aa).

52–54 (GES) contacts L-glutamine. Residue C84 is the Nucleophile of the active site. Residues R115 and 143-144 (IR) contribute to the L-glutamine site. Active-site charge relay system residues include H179 and E181.

Belongs to the glutaminase PdxT/SNO family. In the presence of PdxS, forms a dodecamer of heterodimers. Only shows activity in the heterodimer.

The catalysed reaction is aldehydo-D-ribose 5-phosphate + D-glyceraldehyde 3-phosphate + L-glutamine = pyridoxal 5'-phosphate + L-glutamate + phosphate + 3 H2O + H(+). The enzyme catalyses L-glutamine + H2O = L-glutamate + NH4(+). It functions in the pathway cofactor biosynthesis; pyridoxal 5'-phosphate biosynthesis. Functionally, catalyzes the hydrolysis of glutamine to glutamate and ammonia as part of the biosynthesis of pyridoxal 5'-phosphate. The resulting ammonia molecule is channeled to the active site of PdxS. The polypeptide is Pyridoxal 5'-phosphate synthase subunit PdxT (Methanosarcina acetivorans (strain ATCC 35395 / DSM 2834 / JCM 12185 / C2A)).